The following is a 211-amino-acid chain: Cytidylate kinase (211 aa).

9–17 (GPAAAGKGT) is a binding site for ATP.

Belongs to the cytidylate kinase family. Type 1 subfamily.

It is found in the cytoplasm. The enzyme catalyses CMP + ATP = CDP + ADP. The catalysed reaction is dCMP + ATP = dCDP + ADP. In Paramagnetospirillum magneticum (strain ATCC 700264 / AMB-1) (Magnetospirillum magneticum), this protein is Cytidylate kinase.